Reading from the N-terminus, the 180-residue chain is Large ribosomal subunit protein uL5 (180 aa).

The protein belongs to the universal ribosomal protein uL5 family. In terms of assembly, part of the 50S ribosomal subunit; part of the 5S rRNA/L5/L18/L25 subcomplex. Contacts the 5S rRNA and the P site tRNA. Forms a bridge to the 30S subunit in the 70S ribosome.

In terms of biological role, this is one of the proteins that bind and probably mediate the attachment of the 5S RNA into the large ribosomal subunit, where it forms part of the central protuberance. In the 70S ribosome it contacts protein S13 of the 30S subunit (bridge B1b), connecting the 2 subunits; this bridge is implicated in subunit movement. Contacts the P site tRNA; the 5S rRNA and some of its associated proteins might help stabilize positioning of ribosome-bound tRNAs. The sequence is that of Large ribosomal subunit protein uL5 from Streptococcus thermophilus (strain CNRZ 1066).